Reading from the N-terminus, the 301-residue chain is Formylmethanofuran--tetrahydromethanopterin formyltransferase-like protein (301 aa).

Belongs to the FTR family.

This is Formylmethanofuran--tetrahydromethanopterin formyltransferase-like protein from Archaeoglobus fulgidus (strain ATCC 49558 / DSM 4304 / JCM 9628 / NBRC 100126 / VC-16).